A 194-amino-acid polypeptide reads, in one-letter code: MPSSPLRVAVVCSSNQNRSMEAHNILSKRGFSVRSFGTGTHVKLPGPAPDKPNVYDFKTTYDQMYNDLLRKDKELYTQNGILHMLDRNKRIKPRPERFQNCKDLFDLILTCEERVYDQVVEDLNSREQETCQPVHVVNVDIQDNHEEATLGAFLICELCQCIQHTEDMENEIDELLQEFEEKSGRTFLHTVCFY.

A coiled-coil region spans residues 160–186; that stretch reads QCIQHTEDMENEIDELLQEFEEKSGRT.

Belongs to the SSU72 phosphatase family. In terms of assembly, interacts with GTF2B (via C-terminus); this interaction is inhibited by SYMPK. Interacts with RB1. Interacts with CD226. Interacts with SYMPK.

Its subcellular location is the nucleus. It is found in the cytoplasm. It carries out the reaction O-phospho-L-seryl-[protein] + H2O = L-seryl-[protein] + phosphate. It catalyses the reaction O-phospho-L-threonyl-[protein] + H2O = L-threonyl-[protein] + phosphate. Functionally, protein phosphatase that catalyzes the dephosphorylation of the C-terminal domain of RNA polymerase II. Plays a role in RNA processing and termination. Plays a role in pre-mRNA polyadenylation via its interaction with SYMPK. The protein is RNA polymerase II subunit A C-terminal domain phosphatase SSU72 (SSU72) of Homo sapiens (Human).